We begin with the raw amino-acid sequence, 394 residues long: Guanine nucleotide-binding protein G(s) subunit alpha (394 aa).

The interval 1–25 is disordered; sequence MGCLGDSKTEDQRNEEKAQREANKK. Gly2 carries the N-palmitoyl glycine lipid modification. The S-palmitoyl cysteine moiety is linked to residue Cys3. The span at 7-25 shows a compositional bias: basic and acidic residues; the sequence is SKTEDQRNEEKAQREANKK. Residues 39-394 enclose the G-alpha domain; it reads ATHRLLLLGA…RMHLRQYELL (356 aa). Positions 42–55 are G1 motif; that stretch reads RLLLLGAGESGKST. 47-55 is a GTP binding site; it reads GAGESGKST. Residue Ser54 participates in Mg(2+) binding. The interval 68–90 is disordered; the sequence is FNGEGGEEDPQAARSNSDGEKAT. The tract at residues 196 to 204 is G2 motif; the sequence is DLLRCRVLT. GTP is bound by residues 197 to 204, 223 to 227, 292 to 295, and Ala366; these read LLRCRVLT, DVGGQ, and NKQD. Thr204 is a binding site for Mg(2+). The segment at 219-228 is G3 motif; the sequence is FHMFDVGGQR. Positions 288 to 295 are G4 motif; it reads ILFLNKQD. A G5 motif region spans residues 364–369; it reads TCAVDT.

This sequence belongs to the G-alpha family. G(s) subfamily. In terms of assembly, heterotrimeric G proteins are composed of 3 units; alpha, beta and gamma. The alpha chain contains the guanine nucleotide binding site. Interacts with CRY1; the interaction may block GPCR-mediated regulation of cAMP concentrations. Interacts with ADCY6 and stimulates its adenylyl cyclase activity. Interacts with ADCY2 and ADCY5. Stimulates the ADCY5 adenylyl cyclase activity. Interaction with SASH1.

The protein resides in the cell membrane. Its function is as follows. Guanine nucleotide-binding proteins (G proteins) function as transducers in numerous signaling pathways controlled by G protein-coupled receptors (GPCRs). Signaling involves the activation of adenylyl cyclases, resulting in increased levels of the signaling molecule cAMP. GNAS functions downstream of several GPCRs, including beta-adrenergic receptors. Stimulates the Ras signaling pathway via RAPGEF2. The sequence is that of Guanine nucleotide-binding protein G(s) subunit alpha (GNAS) from Cricetulus longicaudatus (Long-tailed dwarf hamster).